Consider the following 372-residue polypeptide: Heterogeneous nuclear rnp K-like protein 2 (372 aa).

Residues 1 to 23 show a composition bias toward polar residues; the sequence is MSDINDPNSISLPVGSSCTSRGA. The segment at 1-49 is disordered; that stretch reads MSDINDPNSISLPVGSSCTSRGASTETFTTSRSTTLFSSQQESKDEGNV. The segment covering 24–39 has biased composition (low complexity); the sequence is STETFTTSRSTTLFSS. 3 KH domains span residues 59–123, 167–232, and 283–354; these read TINH…LGQI, IGTS…LLQI, and EFKA…ESML.

The protein belongs to the HEK2 family. In terms of assembly, binds RNA.

Its subcellular location is the cytoplasm. The protein resides in the P-body. It is found in the nucleus. The protein localises to the chromosome. It localises to the telomere. RNA-binding protein involved in the correct localization of transcripts in the cell. RNA localization is a widespread mechanism for achieving localized protein synthesis. Involved in structural and functional organization of telomeric chromatin and regulates silencing at the HMR locus. In Zygosaccharomyces rouxii (strain ATCC 2623 / CBS 732 / NBRC 1130 / NCYC 568 / NRRL Y-229), this protein is Heterogeneous nuclear rnp K-like protein 2 (HEK2).